A 190-amino-acid polypeptide reads, in one-letter code: Early nodulin-like protein 12 (190 aa).

The N-terminal stretch at 1 to 21 (MGIIVPVLTLVFLLFAKVSHG) is a signal peptide. Residues 26–130 (RVILVGGSVG…GEKITLVVLA (105 aa)) enclose the Phytocyanin domain. N44 carries an N-linked (GlcNAc...) asparagine glycan. A disulfide bridge connects residues C84 and C118. Positions 135–164 (GGGSSSGDAPKVSPVSPTAQTPAPAPGPAA) are disordered. Over residues 151–164 (PTAQTPAPAPGPAA) the composition is skewed to low complexity. N167 carries GPI-anchor amidated asparagine lipidation. Positions 168 to 190 (AAVGLKVASGWFLTAVVVGLAMA) are cleaved as a propeptide — removed in mature form.

Belongs to the early nodulin-like (ENODL) family. Confined to flowers and siliques. Expressed in female gametophytes.

The protein resides in the cell membrane. May act as a carbohydrate transporter. Required, together with ENODL11, ENODL12, ENODL13, ENODL14 and ENODL15, for male-female communication and pollen tube reception and burst at the synergid cell surface of the female gametophyte. This chain is Early nodulin-like protein 12, found in Arabidopsis thaliana (Mouse-ear cress).